The following is a 163-amino-acid chain: Photosystem II extrinsic protein V (163 aa).

Positions methionine 1–alanine 26 are cleaved as a signal peptide. Heme c-binding residues include cysteine 63, cysteine 66, histidine 67, and histidine 118.

Belongs to the cytochrome c family. PsbV subfamily. As to quaternary structure, PSII is composed of 1 copy each of membrane proteins PsbA, PsbB, PsbC, PsbD, PsbE, PsbF, PsbH, PsbI, PsbJ, PsbK, PsbL, PsbM, PsbT, PsbY, PsbZ, Psb30/Ycf12, at least 3 peripheral proteins of the oxygen-evolving complex and a large number of cofactors. It forms dimeric complexes. The extrinsic subunits in red algae are PsbO (OEC33), PsbQ', cytochrome c-550 and PsbU. Heme c is required as a cofactor.

The protein localises to the plastid. The protein resides in the chloroplast thylakoid membrane. Functionally, one of the extrinsic, lumenal subunits of photosystem II (PSII). PSII is a light-driven water plastoquinone oxidoreductase, using light energy to abstract electrons from H(2)O, generating a proton gradient subsequently used for ATP formation. The extrinsic proteins stabilize the structure of photosystem II oxygen-evolving complex (OEC), the ion environment of oxygen evolution and protect the OEC against heat-induced inactivation. In Porphyra purpurea (Red seaweed), this protein is Photosystem II extrinsic protein V.